Here is a 500-residue protein sequence, read N- to C-terminus: Phenylalanine--tRNA ligase alpha subunit (500 aa).

L-phenylalanine is bound by residues Thr343, 382–384 (QID), and Phe423. Position 425 (Glu425) interacts with Mg(2+). Position 448 (Phe448) interacts with L-phenylalanine.

It belongs to the class-II aminoacyl-tRNA synthetase family. Phe-tRNA synthetase alpha subunit type 2 subfamily. Tetramer of two alpha and two beta subunits. It depends on Mg(2+) as a cofactor.

Its subcellular location is the cytoplasm. The enzyme catalyses tRNA(Phe) + L-phenylalanine + ATP = L-phenylalanyl-tRNA(Phe) + AMP + diphosphate + H(+). In Pyrococcus abyssi (strain GE5 / Orsay), this protein is Phenylalanine--tRNA ligase alpha subunit.